Consider the following 101-residue polypeptide: Small ribosomal subunit protein uS14A (101 aa).

Residues 35-56 form a disordered region; that stretch reads TSSYEQRLDAQRALSRQPRDAS.

It belongs to the universal ribosomal protein uS14 family. As to quaternary structure, part of the 30S ribosomal subunit. Contacts proteins S3 and S10.

Functionally, binds 16S rRNA, required for the assembly of 30S particles and may also be responsible for determining the conformation of the 16S rRNA at the A site. The chain is Small ribosomal subunit protein uS14A from Mycobacterium marinum (strain ATCC BAA-535 / M).